The sequence spans 118 residues: Ribonuclease P protein component (118 aa).

Belongs to the RnpA family. In terms of assembly, consists of a catalytic RNA component (M1 or rnpB) and a protein subunit.

It catalyses the reaction Endonucleolytic cleavage of RNA, removing 5'-extranucleotides from tRNA precursor.. In terms of biological role, RNaseP catalyzes the removal of the 5'-leader sequence from pre-tRNA to produce the mature 5'-terminus. It can also cleave other RNA substrates such as 4.5S RNA. The protein component plays an auxiliary but essential role in vivo by binding to the 5'-leader sequence and broadening the substrate specificity of the ribozyme. The sequence is that of Ribonuclease P protein component from Vibrio cholerae serotype O1 (strain ATCC 39541 / Classical Ogawa 395 / O395).